Consider the following 1088-residue polypeptide: Extended synaptotagmin-1 (1088 aa).

Met-1 is subject to N-acetylmethionine. Residues 1–30 (MERSPEEGAGPEPSGQSPATDSTRERDGGS) are Cytoplasmic-facing. The segment at 1–38 (MERSPEEGAGPEPSGQSPATDSTRERDGGSGVPPAGPG) is disordered. Residues 31-51 (GVPPAGPGAASEALAVLTSFG) traverse the membrane as a helical segment. Over 52–54 (RRL) the chain is Lumenal. A helical transmembrane segment spans residues 55 to 75 (LVLVPVYLAGAAGLSVGFVLF). Over 76 to 1088 (GLALYLGWRR…LIDDRDKGGS (1013 aa)) the chain is Cytoplasmic. In terms of domain architecture, SMP-LTD spans 127-305 (DVEKAEWLNK…LPNRLLVPLV (179 aa)). C2 domains lie at 304–425 (LVPD…DNWY), 446–572 (DAEK…QLSS), 618–740 (DAPP…DEWL), and 771–888 (QVNS…ALSG). Ser-316 is subject to Phosphoserine; by CDK5. Residues Lys-336, Asp-337, Asp-349, Asp-396, Asp-398, Asp-400, Asp-402, and Asp-403 each contribute to the Ca(2+) site. Residues 599-630 (TEPGAQDWDSESPETGSSVDAPPRPYHTTPNS) are disordered. The residue at position 806 (Lys-806) is an N6-acetyllysine. Position 809 is a phosphoserine (Ser-809). The interval 911–930 (HSHSSSSLNEEPEVLGDPTH) is disordered. 2 positions are modified to phosphoserine: Ser-933 and Ser-947. A C2 5 domain is found at 955-1077 (PLGQVKLTVW…DLSQGAAQWY (123 aa)). Residue Tyr-993 is modified to Phosphotyrosine. Residues 1002-1009 (KNRGTKRK) form a required for phosphatidylinositol 4,5-bisphosphate-dependent location at the cell membrane region.

Belongs to the extended synaptotagmin family. Interacts with ESYT2 and ESYT3. Interacts with ADGRD1; inhibiting the G-protein-coupled receptor activity of ADGRD1. Interaction with ADGRD1 is abolished when cytosolic calcium increases, relieving ADGRD1 G-protein-coupled receptor activity. Interacts (phosphorylated form) with SLC2A4. Phosphorylated on Ser residues in insulin-treated adipocytes (in vitro); this promotes interaction with SLC2A4. In terms of tissue distribution, ubiquitously expressed with a higher expression in spleen and white adipose tissue.

The protein resides in the endoplasmic reticulum membrane. It localises to the cell membrane. In terms of biological role, binds calcium (via the C2 domains) and translocates to sites of contact between the endoplasmic reticulum and the cell membrane in response to increased cytosolic calcium levels. Helps tether the endoplasmic reticulum to the cell membrane and promotes the formation of appositions between the endoplasmic reticulum and the cell membrane. Acts as an inhibitor of ADGRD1 G-protein-coupled receptor activity in absence of cytosolic calcium. Binds glycerophospholipids in a barrel-like domain and may play a role in cellular lipid transport. In Rattus norvegicus (Rat), this protein is Extended synaptotagmin-1 (Esyt1).